A 398-amino-acid polypeptide reads, in one-letter code: S-adenosylmethionine synthase (398 aa).

H17 is an ATP binding site. D19 contacts Mg(2+). A K(+)-binding site is contributed by E45. L-methionine-binding residues include E58 and Q101. A flexible loop region spans residues 101–111 (QSPDIAQGVDK). ATP is bound by residues 176 to 178 (DGK), 243 to 244 (RF), D252, 258 to 259 (RK), and K279. D252 lines the L-methionine pocket. Residue K283 coordinates L-methionine.

It belongs to the AdoMet synthase family. As to quaternary structure, homotetramer; dimer of dimers. Mg(2+) serves as cofactor. K(+) is required as a cofactor.

It localises to the cytoplasm. It catalyses the reaction L-methionine + ATP + H2O = S-adenosyl-L-methionine + phosphate + diphosphate. Its pathway is amino-acid biosynthesis; S-adenosyl-L-methionine biosynthesis; S-adenosyl-L-methionine from L-methionine: step 1/1. Catalyzes the formation of S-adenosylmethionine (AdoMet) from methionine and ATP. The overall synthetic reaction is composed of two sequential steps, AdoMet formation and the subsequent tripolyphosphate hydrolysis which occurs prior to release of AdoMet from the enzyme. This is S-adenosylmethionine synthase from Staphylococcus aureus (strain Mu3 / ATCC 700698).